The chain runs to 87 residues: LPLDVAIECLTLRESRRDIDVVRDPVEEELLKEVEVIEATKKALQQRVSQAFQQLCLLQEVRQQLCSDHRDKMESLDIDRGCLSLNL.

The stretch at Val-26–Leu-55 forms a coiled coil.

It belongs to the tektin family. Microtubule inner protein component of sperm flagellar doublet microtubules. May interact with CCDC172. In terms of processing, tyrosine phosphorylated. Ubiquitinated, leading to its degradation. Deubiquitinated by USP16, promoting its stability. As to expression, detected in sperm flagella (at protein level).

The protein localises to the cytoplasm. Its subcellular location is the cytoskeleton. It localises to the cilium axoneme. It is found in the flagellum axoneme. The protein resides in the microtubule organizing center. In terms of biological role, microtubule inner protein (MIP) part of the dynein-decorated doublet microtubules (DMTs) in cilia and flagellar axoneme. Plays a key role in the assembly or attachment of the inner dynein arm to microtubules in sperm flagella and tracheal cilia. Forms filamentous polymers in the walls of ciliary and flagellar microtubules. The sequence is that of Tektin-2 from Mesocricetus auratus (Golden hamster).